We begin with the raw amino-acid sequence, 458 residues long: Divalent metal cation transporter MntH (458 aa).

11 helical membrane passes run glycine 38 to methionine 58, leucine 86 to leucine 106, glycine 119 to isoleucine 139, isoleucine 151 to methionine 171, alanine 180 to alanine 200, methionine 223 to histidine 243, leucine 275 to glycine 295, isoleucine 315 to serine 335, glycine 370 to valine 390, isoleucine 395 to phenylalanine 415, and tryptophan 436 to leucine 456.

It belongs to the NRAMP family.

It localises to the cell membrane. Functionally, h(+)-stimulated, divalent metal cation uptake system. The polypeptide is Divalent metal cation transporter MntH (Latilactobacillus sakei subsp. sakei (strain 23K) (Lactobacillus sakei subsp. sakei)).